A 123-amino-acid chain; its full sequence is Large ribosomal subunit protein uL14 (123 aa).

The protein belongs to the universal ribosomal protein uL14 family. As to quaternary structure, part of the 50S ribosomal subunit. Forms a cluster with proteins L3 and L19. In the 70S ribosome, L14 and L19 interact and together make contacts with the 16S rRNA in bridges B5 and B8.

Binds to 23S rRNA. Forms part of two intersubunit bridges in the 70S ribosome. This Hamiltonella defensa subsp. Acyrthosiphon pisum (strain 5AT) protein is Large ribosomal subunit protein uL14.